The chain runs to 384 residues: GDP-mannose transporter (384 aa).

Topologically, residues 1 to 40 are cytoplasmic; it reads MVEDKKTDDYTIEMDKMDQGSKNFEAAAPPPQPRTPPAGS. The chain crosses the membrane as a helical span at residues 41–61; it reads ISNNPILPVLAYCGSSILMTV. Residues 62–69 lie on the Lumenal side of the membrane; the sequence is MNKYVLSG. The chain crosses the membrane as a helical span at residues 70-90; that stretch reads LDFNLNFFLLCVQSIVCIVAI. Topologically, residues 91 to 110 are cytoplasmic; it reads QTCKSCGLITYRDFSADEAR. A helical membrane pass occupies residues 111–127; sequence KWFPITLLLIGMIYTGS. At 128 to 134 the chain is on the lumenal side; the sequence is KALQFLS. Residues 135 to 151 traverse the membrane as a helical segment; that stretch reads IPVYTIFKNLTIILIAY. Residues 152–160 are Cytoplasmic-facing; that stretch reads GEVLWFGGS. The chain crosses the membrane as a helical span at residues 161–182; sequence VTGLTLFSFGLMVLSSIIAAWA. Residues 183-200 lie on the Lumenal side of the membrane; it reads DIKHAVESTGDATAKVST. A helical membrane pass occupies residues 201-221; the sequence is LNAGYIWMLVNCLCTSSYVLG. Residues 222-236 are Cytoplasmic-facing; it reads MRKRIKLTNFKDFDT. A helical membrane pass occupies residues 237–257; the sequence is LAMFYNNLLSIPVLIVLTGLM. Residues 258–276 are Lumenal-facing; that stretch reads EDWSSANITRNFPPADRNN. Asn264 is a glycosylation site (N-linked (GlcNAc...) asparagine). A helical membrane pass occupies residues 277–297; that stretch reads IIFAMILSGLSSVFISYTSAW. Topologically, residues 298-305 are cytoplasmic; it reads CVRVTSST. The chain crosses the membrane as a helical span at residues 306–326; sequence TYSMVGALNKLPIALSGLIFF. Over 327 to 329 the chain is Lumenal; sequence DAP. Residues 330–350 traverse the membrane as a helical segment; that stretch reads VTFPSVSAIVVGFVSGIVYAV. Residues 351–384 are Cytoplasmic-facing; it reads AKIKQNAKPKTGVLPMSNPPVSASSQSMRDSLRS. The tract at residues 364-384 is disordered; that stretch reads LPMSNPPVSASSQSMRDSLRS. The span at 369–384 shows a compositional bias: polar residues; sequence PPVSASSQSMRDSLRS.

It belongs to the TPT transporter family. SLC35D subfamily. In terms of assembly, homooligomer.

The protein localises to the golgi apparatus membrane. It is found in the cytoplasmic vesicle membrane. The protein resides in the endoplasmic reticulum membrane. Involved in the import of GDP-mannose from the cytoplasm into the Golgi lumen. In Aspergillus terreus (strain NIH 2624 / FGSC A1156), this protein is GDP-mannose transporter (gmt1).